A 233-amino-acid polypeptide reads, in one-letter code: VIGGVECNINEHGFLALLYSRRFQCGGTLINEEWVLTAAHCDMRNMYIYLGVHNVSVQYDDEQRRYPKKKYFCLSSRNYNQWDKDIMLIRLNRPVRNSAHIAPLSLPSNPPSVGSVCRVMGWGTITSPQETLPDVPHCANINILDYEVCRAAYPELPVTRRTLCAGILEGGKDSCNGDSGGPLICNGQFQGIAYWGADTCAQPREPGLYTKVFDYTDWIQSIISGNTDATCPQ.

In terms of domain architecture, Peptidase S1 spans 1–224 (VIGGVECNIN…YTDWIQSIIS (224 aa)). Cystine bridges form between C7–C138, C25–C41, C73–C231, C117–C185, C149–C164, and C175–C200. H40 serves as the catalytic Charge relay system. N-linked (GlcNAc...) asparagine glycosylation occurs at N54. D85 functions as the Charge relay system in the catalytic mechanism. S179 (charge relay system) is an active-site residue.

Belongs to the peptidase S1 family. Snake venom subfamily. Monomer. In terms of tissue distribution, expressed by the venom gland.

It localises to the secreted. Snake venom serine protease that may act in the hemostasis system of the prey. This chain is Snake venom serine protease ussurase, found in Gloydius ussuriensis (Ussuri mamushi).